The primary structure comprises 112 residues: Cytochrome c (112 aa).

The heme c site is built by Cys-23, Cys-26, His-27, and Met-89.

The protein belongs to the cytochrome c family. In terms of processing, binds 1 heme c group covalently per subunit.

The protein localises to the mitochondrion intermembrane space. Its function is as follows. Electron carrier protein. The oxidized form of the cytochrome c heme group can accept an electron from the heme group of the cytochrome c1 subunit of cytochrome reductase. Cytochrome c then transfers this electron to the cytochrome oxidase complex, the final protein carrier in the mitochondrial electron-transport chain. This Chlamydomonas reinhardtii (Chlamydomonas smithii) protein is Cytochrome c (CYC1).